The sequence spans 508 residues: Vacuolar serine-type carboxypeptidase ATG42 (508 aa).

The signal sequence occupies residues 1-24 (MKYLNLVFVLQLLISIKYASFGRA). Disulfide bonds link cysteine 132-cysteine 375, cysteine 267-cysteine 281, cysteine 291-cysteine 314, cysteine 298-cysteine 307, and cysteine 336-cysteine 345. A glycan (N-linked (GlcNAc...) asparagine) is linked at asparagine 163. Residue serine 219 is part of the active site. Asparagine 242 carries N-linked (GlcNAc...) asparagine glycosylation. N-linked (GlcNAc...) asparagine glycans are attached at residues asparagine 339 and asparagine 371. The active site involves aspartate 415. Position 418 (cysteine 418) interacts with substrate. The active site involves histidine 474. Methionine 475 lines the substrate pocket.

The protein belongs to the peptidase S10 family.

It localises to the vacuole lumen. It carries out the reaction Release of a C-terminal amino acid with broad specificity.. In terms of biological role, vacuolar serine-type carboxypeptidase involved in vacuolar zymogen activation, breakdown of the autophagic body, and autophagosome-dependent protein synthesis. Plays a key role in phytochelatin (PC) synthesis from glutathione (GSH) by cleaving the Gly from GSH and form the PC-peptides of the structure (gamma-Glu-Cys)2-Gly. Also involved in resistance to xenobiotics via the degradation of glutathione-S-conjugates. In Saccharomyces cerevisiae (strain ATCC 204508 / S288c) (Baker's yeast), this protein is Vacuolar serine-type carboxypeptidase ATG42.